A 612-amino-acid chain; its full sequence is MPEYRSRTTTAGRNMAGARALWRATGMKDDDFQKPIIAVVNSFTQFVPGHVHLKDLGQLVAREIEKAGAVAKEFNTIAVDDGIAMGHDGMLYSLPSRDIIADSVEYMVNAHCADAMVCISNCDKITPGMLMAAMRLNIPCIFVSGGPMEAGKTKLAEHNLDLVDAMVIAADDTASDETVAEYERSACPTCGSCSGMFTANSMNCLTEVLGLSLPGNGTVLATHADRRKLFEQAGQQIVAITRDYYEQDNVNVLPRSIGSKAAFENAITLDIAMGGSTNTILHLLAIAQEAEVDFDLKDIDRLSRKVPQLCKVAPNTQKYHIEDVHRAGGIYGILGELERGKLLDSSVPTVHSTTLSAAIAKWDIQQTSDDQVAHFYRAGPAGIPTQVAFSQDTRWPSLDGDRAQGCIRNVANAYSQEGGLAVLYGNIAADGCVVKTAGVDDSILVFEGPAHITESQDEAVANILAGKVQAGEVVIVRYEGPKGGPGMQEMLYPTSYLKSKGLGKNCALLTDGRFSGGTSGLSIGHVSPEAAAGGAIGLVRNGDIIRIDIPNRSIDVKLSDDELTARREAQNELGWKPAELRPRKVSAALKAYAKLATSADKGAVRDLSQLDD.

Residue Asp-81 participates in Mg(2+) binding. Cys-122 contacts [2Fe-2S] cluster. 2 residues coordinate Mg(2+): Asp-123 and Lys-124. Lys-124 carries the post-translational modification N6-carboxylysine. A [2Fe-2S] cluster-binding site is contributed by Cys-193. Mg(2+) is bound at residue Glu-489. Catalysis depends on Ser-515, which acts as the Proton acceptor.

Belongs to the IlvD/Edd family. In terms of assembly, homodimer. It depends on [2Fe-2S] cluster as a cofactor. Mg(2+) is required as a cofactor.

The catalysed reaction is (2R)-2,3-dihydroxy-3-methylbutanoate = 3-methyl-2-oxobutanoate + H2O. It carries out the reaction (2R,3R)-2,3-dihydroxy-3-methylpentanoate = (S)-3-methyl-2-oxopentanoate + H2O. The protein operates within amino-acid biosynthesis; L-isoleucine biosynthesis; L-isoleucine from 2-oxobutanoate: step 3/4. It functions in the pathway amino-acid biosynthesis; L-valine biosynthesis; L-valine from pyruvate: step 3/4. In terms of biological role, functions in the biosynthesis of branched-chain amino acids. Catalyzes the dehydration of (2R,3R)-2,3-dihydroxy-3-methylpentanoate (2,3-dihydroxy-3-methylvalerate) into 2-oxo-3-methylpentanoate (2-oxo-3-methylvalerate) and of (2R)-2,3-dihydroxy-3-methylbutanoate (2,3-dihydroxyisovalerate) into 2-oxo-3-methylbutanoate (2-oxoisovalerate), the penultimate precursor to L-isoleucine and L-valine, respectively. This chain is Dihydroxy-acid dehydratase, found in Teredinibacter turnerae (strain ATCC 39867 / T7901).